Consider the following 398-residue polypeptide: Elongation factor Tu (398 aa).

The region spanning 10-207 is the tr-type G domain; the sequence is KPHVNIGTIG…TVDDYIPDPE (198 aa). The interval 19–26 is G1; it reads GHVDHGKT. 19-26 serves as a coordination point for GTP; that stretch reads GHVDHGKT. Residue Thr26 coordinates Mg(2+). The tract at residues 63 to 67 is G2; that stretch reads GITIN. The G3 stretch occupies residues 84 to 87; that stretch reads DAPG. GTP-binding positions include 84-88 and 139-142; these read DAPGH and NKVD. Residues 139 to 142 are G4; it reads NKVD. A G5 region spans residues 177-179; sequence SAL.

Belongs to the TRAFAC class translation factor GTPase superfamily. Classic translation factor GTPase family. EF-Tu/EF-1A subfamily. In terms of assembly, monomer.

It is found in the cytoplasm. It catalyses the reaction GTP + H2O = GDP + phosphate + H(+). Functionally, GTP hydrolase that promotes the GTP-dependent binding of aminoacyl-tRNA to the A-site of ribosomes during protein biosynthesis. The protein is Elongation factor Tu of Streptococcus mutans serotype c (strain ATCC 700610 / UA159).